We begin with the raw amino-acid sequence, 305 residues long: UDP-3-O-acyl-N-acetylglucosamine deacetylase (305 aa).

Residues histidine 79, histidine 238, and aspartate 242 each coordinate Zn(2+). The Proton donor role is filled by histidine 265.

The protein belongs to the LpxC family. The cofactor is Zn(2+).

It catalyses the reaction a UDP-3-O-[(3R)-3-hydroxyacyl]-N-acetyl-alpha-D-glucosamine + H2O = a UDP-3-O-[(3R)-3-hydroxyacyl]-alpha-D-glucosamine + acetate. The protein operates within glycolipid biosynthesis; lipid IV(A) biosynthesis; lipid IV(A) from (3R)-3-hydroxytetradecanoyl-[acyl-carrier-protein] and UDP-N-acetyl-alpha-D-glucosamine: step 2/6. In terms of biological role, catalyzes the hydrolysis of UDP-3-O-myristoyl-N-acetylglucosamine to form UDP-3-O-myristoylglucosamine and acetate, the committed step in lipid A biosynthesis. This Salmonella paratyphi A (strain ATCC 9150 / SARB42) protein is UDP-3-O-acyl-N-acetylglucosamine deacetylase.